Here is a 557-residue protein sequence, read N- to C-terminus: Venom carboxylesterase-6 (557 aa).

The N-terminal stretch at 1–21 (MYMLKLSYILLFLGFVKFSWQ) is a signal peptide. A disulfide bridge connects residues C88 and C108. N145 is a glycosylation site (N-linked (GlcNAc...) asparagine). S212 acts as the Acyl-ester intermediate in catalysis. C264 and C275 are oxidised to a cystine. E341 functions as the Charge relay system in the catalytic mechanism. N374 is a glycosylation site (N-linked (GlcNAc...) asparagine). The active-site Charge relay system is the H464. N-linked (GlcNAc...) asparagine glycans are attached at residues N478, N528, and N542.

The protein belongs to the type-B carboxylesterase/lipase family. In terms of tissue distribution, expressed by the venom gland.

It localises to the secreted. It carries out the reaction a carboxylic ester + H2O = an alcohol + a carboxylate + H(+). In Apis mellifera (Honeybee), this protein is Venom carboxylesterase-6.